A 413-amino-acid polypeptide reads, in one-letter code: MAKYENLVTRFLKYVKTETRSNEDSTTIPSTQTQVEFIKGLANELKGLGLQNVHISDESGYVFATLPSNLEDDANTKVVGFISHVDTADFNAHNVQPQIVENYDGESDIKLDEAGNFVLTTAEFPNLRNYKGHDLITTDGSTLLGADDKSGVAEIMSAMEYLQAHPEIKHGEIKVGFGPDEEIGTGADNFNVEDFGADIAYTVDGGPLGELEYETFNAAQAKLTFKGKDVHTGTAKNVMVNAIQLAINYQNSLPADEVPEKTEGREGFFHLFKFDGSVEEAHTTYIIRDHDRKHFEERKQLMLDIAERMNTELGEERVVIDLQDQYYNMREVLEKDMTAVDIAKEAMEDLGITPEIYPVRGGTDGSKISFMGLPTPNLFAGGENMHGRYEYVSTQVMEKATDVILEIVKLLAK.

His84 provides a ligand contact to Zn(2+). The active site involves Asp86. Zn(2+) is bound at residue Asp147. The active-site Proton acceptor is the Glu181. Residues Glu182, Asp204, and His386 each contribute to the Zn(2+) site.

This sequence belongs to the peptidase M20B family. It depends on Zn(2+) as a cofactor.

The protein localises to the cytoplasm. The catalysed reaction is Release of the N-terminal residue from a tripeptide.. Its function is as follows. Cleaves the N-terminal amino acid of tripeptides. The polypeptide is Peptidase T (Ligilactobacillus salivarius (strain UCC118) (Lactobacillus salivarius)).